Consider the following 356-residue polypeptide: UDP-N-acetylglucosamine--N-acetylmuramyl-(pentapeptide) pyrophosphoryl-undecaprenol N-acetylglucosamine transferase (356 aa).

Positions 195 and 287 each coordinate UDP-N-acetyl-alpha-D-glucosamine.

It belongs to the glycosyltransferase 28 family. MurG subfamily.

It localises to the cell membrane. The enzyme catalyses Mur2Ac(oyl-L-Ala-gamma-D-Glu-L-Lys-D-Ala-D-Ala)-di-trans,octa-cis-undecaprenyl diphosphate + UDP-N-acetyl-alpha-D-glucosamine = beta-D-GlcNAc-(1-&gt;4)-Mur2Ac(oyl-L-Ala-gamma-D-Glu-L-Lys-D-Ala-D-Ala)-di-trans,octa-cis-undecaprenyl diphosphate + UDP + H(+). It participates in cell wall biogenesis; peptidoglycan biosynthesis. In terms of biological role, cell wall formation. Catalyzes the transfer of a GlcNAc subunit on undecaprenyl-pyrophosphoryl-MurNAc-pentapeptide (lipid intermediate I) to form undecaprenyl-pyrophosphoryl-MurNAc-(pentapeptide)GlcNAc (lipid intermediate II). The protein is UDP-N-acetylglucosamine--N-acetylmuramyl-(pentapeptide) pyrophosphoryl-undecaprenol N-acetylglucosamine transferase of Streptococcus gordonii (strain Challis / ATCC 35105 / BCRC 15272 / CH1 / DL1 / V288).